The chain runs to 102 residues: Large ribosomal subunit protein bL21 (102 aa).

This sequence belongs to the bacterial ribosomal protein bL21 family. Part of the 50S ribosomal subunit. Contacts protein L20.

In terms of biological role, this protein binds to 23S rRNA in the presence of protein L20. This Bifidobacterium longum (strain DJO10A) protein is Large ribosomal subunit protein bL21.